Reading from the N-terminus, the 260-residue chain is Type II methyltransferase M1.MboII (260 aa).

Residues Cys-12, Asp-30, Lys-197, 223-225, and 241-242 each bind S-adenosyl-L-methionine; these read SGT and DM.

The protein belongs to the N(4)/N(6)-methyltransferase family. As to quaternary structure, at low concentration exists as a monomer and homodimer. Probably binds to DNA as a monomer.

The catalysed reaction is a 2'-deoxyadenosine in DNA + S-adenosyl-L-methionine = an N(6)-methyl-2'-deoxyadenosine in DNA + S-adenosyl-L-homocysteine + H(+). In terms of biological role, a beta subtype methylase that recognizes the double-stranded sequence 5'-GAAGA-3', methylates A-5 on the top strand, and protects the DNA from cleavage by the MboII endonuclease. It is not known if the cytosine of the complementary sequence TCTTC is also methylated by this enzyme. In Moraxella bovis, this protein is Type II methyltransferase M1.MboII.